The chain runs to 585 residues: Sodium/calcium exchanger NCL (585 aa).

Transmembrane regions (helical) follow at residues valine 83–glycine 103, leucine 106–alanine 126, valine 149–glycine 169, isoleucine 212–threonine 232, and valine 239–phenylalanine 259. 2 EF-hand domains span residues proline 299–glutamate 334 and aspartate 339–glutamine 374. Ca(2+) is bound by residues aspartate 312, asparagine 314, aspartate 316, histidine 318, glutamate 323, aspartate 352, aspartate 356, glutamine 358, and glutamate 363. The next 2 helical transmembrane spans lie at tryptophan 427 to alanine 447 and phenylalanine 457 to threonine 477. The N-linked (GlcNAc...) asparagine glycan is linked to asparagine 478. The next 3 helical transmembrane spans lie at cysteine 505–valine 525, phenylalanine 532–phenylalanine 552, and leucine 558–leucine 578.

It belongs to the Ca(2+):cation antiporter (CaCA) (TC 2.A.19) family. Expressed in roots, leaves, stems, petals, stamens, ovules and siliques.

The protein localises to the cell membrane. The protein resides in the vacuole membrane. Functionally, possesses sodium/calcium exchanger (NCX) activity when expressed in a heterologous mammalian CHO-K1 cell system. Does not possess cation/proton exchanger (CAX) or sodium/proton (NHX) activity when expressed in a heterologous yeast cell system. Has the ability to bind calcium in vitro. Participates in the maintenance of calcium homeostasis. May play a role in auxin response, diurnal rhythm and flowering time. Involved in salt stress response. This Arabidopsis thaliana (Mouse-ear cress) protein is Sodium/calcium exchanger NCL.